A 94-amino-acid chain; its full sequence is Protein canopy homolog 1 (94 aa).

Belongs to the canopy family.

This is Protein canopy homolog 1 (Cnpy1) from Mus musculus (Mouse).